A 276-amino-acid polypeptide reads, in one-letter code: Large ribosomal subunit protein uL2 (276 aa).

Positions 218-255 (PTVRGSAMNPCDHPHGGGEGRTPIGMSSPVTPWGKPAL) are disordered.

The protein belongs to the universal ribosomal protein uL2 family. Part of the 50S ribosomal subunit. Forms a bridge to the 30S subunit in the 70S ribosome.

One of the primary rRNA binding proteins. Required for association of the 30S and 50S subunits to form the 70S ribosome, for tRNA binding and peptide bond formation. It has been suggested to have peptidyltransferase activity; this is somewhat controversial. Makes several contacts with the 16S rRNA in the 70S ribosome. The chain is Large ribosomal subunit protein uL2 from Clostridium tetani (strain Massachusetts / E88).